We begin with the raw amino-acid sequence, 783 residues long: Probable alpha,alpha-trehalose-phosphate synthase [UDP-forming] 3 (783 aa).

Residues 11 to 456 (QTLLVVANRL…GFDFLSELND (446 aa)) are glycosyltransferase.

In the N-terminal section; belongs to the glycosyltransferase 20 family. The protein in the C-terminal section; belongs to the trehalose phosphatase family.

It carries out the reaction D-glucose 6-phosphate + UDP-alpha-D-glucose = alpha,alpha-trehalose 6-phosphate + UDP + H(+). The chain is Probable alpha,alpha-trehalose-phosphate synthase [UDP-forming] 3 (TPS3) from Arabidopsis thaliana (Mouse-ear cress).